A 376-amino-acid polypeptide reads, in one-letter code: 4-hydroxy-3-methylbut-2-en-1-yl diphosphate synthase (flavodoxin) (376 aa).

Positions 272, 275, 307, and 314 each coordinate [4Fe-4S] cluster.

This sequence belongs to the IspG family. [4Fe-4S] cluster serves as cofactor.

The catalysed reaction is (2E)-4-hydroxy-3-methylbut-2-enyl diphosphate + oxidized [flavodoxin] + H2O + 2 H(+) = 2-C-methyl-D-erythritol 2,4-cyclic diphosphate + reduced [flavodoxin]. It participates in isoprenoid biosynthesis; isopentenyl diphosphate biosynthesis via DXP pathway; isopentenyl diphosphate from 1-deoxy-D-xylulose 5-phosphate: step 5/6. Functionally, converts 2C-methyl-D-erythritol 2,4-cyclodiphosphate (ME-2,4cPP) into 1-hydroxy-2-methyl-2-(E)-butenyl 4-diphosphate. The polypeptide is 4-hydroxy-3-methylbut-2-en-1-yl diphosphate synthase (flavodoxin) (Blochmanniella pennsylvanica (strain BPEN)).